The following is a 346-amino-acid chain: uncharacterized protein (346 aa).

8 helical membrane-spanning segments follow: residues 15–35 (YLRGFALLGIILVNILGLLTV), 55–75 (VEARFYPIFSFLFGVGFYLFI), 93–113 (ILVLFIFGFIHFLFQPGEALT), 139–159 (ILLLFVSIFAAKIFMPLPLIL), 182–202 (IFTFFMFILSVGGLLLQYCYV), 229–249 (LGVATGPILSAFYAGFLLLLL), 269–289 (LTNYISQTALILLAGKLFHLF), and 295–315 (LQSLWLCLAIYVIQLIFSAMW).

This sequence to E.coli YeiB, B.subtilis YxaH and B.subtilis YrkO.

It is found in the cell membrane. Involved in transport. This is an uncharacterized protein from Bacillus acidopullulyticus.